The sequence spans 135 residues: Transcriptional activator protein (135 aa).

A Nuclear localization signal motif is present at residues 17 to 32 (KIQHHIAKKRQVRRRR). The segment at 37–54 (CGCSYYIHLDCINHGFTH) is a zinc-finger region. Residues 120-135 (HLDDLTVSDWSFFKSL) form a transactivation region.

Belongs to the geminiviridae transcriptional activator protein family. In terms of assembly, monomer. Homodimer. Homooligomer. Self-interaction correlates with nuclear localization and efficient activation of transcription. Monomers suppress local silencing by interacting with and inactivating host adenosine kinase 2 (ADK2) in the cytoplasm. Interacts with and inhibits host SNF1 kinase. Binds to ssDNA. May interact with host RPS27A. Post-translationally, phosphorylated.

The protein localises to the host nucleus. It localises to the host cytoplasm. In terms of biological role, multifunctional protein that modulates host antiviral defenses and promotes host attractiveness to insect vectors. Acts as a suppressor of RNA-mediated gene silencing, also known as post-transcriptional gene silencing (PTGS), a mechanism of plant viral defense that limits the accumulation of viral RNAs. TrAP suppresses the host RNA silencing by inhibiting adenosine kinase 2 (ADK2), a kinase involved in a general methylation pathway. Also suppresses the host basal defense by interacting with and inhibiting SNF1 kinase, a key regulator of cell metabolism implicated in innate antiviral defense. Inhibits signal transduction by the phytohormone jasmonate, making the infected plant more attractive to aphids, which are the second host to play a role as a dissemination vector. Acts by binding to ubiquitin precursor RPS27A, thereby preventing ubiquitin degradation of JAZ. In Tomato yellow leaf curl Sardinia virus (isolate Spain-1) (TYLCSV), this protein is Transcriptional activator protein.